Here is a 197-residue protein sequence, read N- to C-terminus: TLE family member 5 (197 aa).

A CCN domain region spans residues 166–197 (LSALGSQTHLSKEDKNGHDGDTHQEDDGEKSD). A disordered region spans residues 170–197 (GSQTHLSKEDKNGHDGDTHQEDDGEKSD). Positions 175–197 (LSKEDKNGHDGDTHQEDDGEKSD) are enriched in basic and acidic residues. S196 carries the post-translational modification Phosphoserine.

It belongs to the WD repeat Groucho/TLE family. In terms of assembly, homooligomer and heterooligomer with other family members. Binds TCF7 and the NF-kappa-B subunit RELA. Interacts with PHF12. Interacts (via Q domain) with SIX3. Interacts with SIX6. In terms of processing, ubiquitinated by XIAP/BIRC4. In terms of tissue distribution, ubiquitously expressed in developing embryos by midgestation, a wide expression is conserved in adult. In mouse, abundantly expressed in muscle, heart and brain.

Its subcellular location is the nucleus. In terms of biological role, transcriptional corepressor. Acts as a dominant repressor towards other family members. Inhibits NF-kappa-B-regulated gene expression. May be required for the initiation and maintenance of the differentiated state. Essential for the transcriptional repressor activity of SIX3 during retina and lens development. This Mus musculus (Mouse) protein is TLE family member 5.